We begin with the raw amino-acid sequence, 352 residues long: Ribosomal lysine N-methyltransferase 5 (352 aa).

S-adenosyl-L-methionine-binding positions include tryptophan 107, 161-163, aspartate 183, tryptophan 244, and leucine 274; that span reads GSG.

Belongs to the class I-like SAM-binding methyltransferase superfamily. RKM5 family.

Functionally, S-adenosyl-L-methionine-dependent protein-lysine N-methyltransferase that methylates 60S ribosomal protein L1. This chain is Ribosomal lysine N-methyltransferase 5 (RKM5), found in Candida glabrata (strain ATCC 2001 / BCRC 20586 / JCM 3761 / NBRC 0622 / NRRL Y-65 / CBS 138) (Yeast).